A 259-amino-acid chain; its full sequence is MAVISMKQLLEAGVHFGHQTRRWNPKMAKYIFTERNGIHVIDLQQTVKYADQAYDFMRDAAANDAVVLFVGTKKQAADAVAEEAVRSGQYFINHRWLGGTLTNWGTIQKRIARLKEIKRMEEDGTFEVLPKKEVALLNKQRARLEKFLGGIEDMPRIPDVMYVVDPHKEQIAVKEAKKLGIPVVAMVDTNTDPDDIDVIIPANDDAIRAVKLITAKLADAIIEGRQGEDAVAVEAEFAASETQADSIEEIVEVVEGDNA.

Belongs to the universal ribosomal protein uS2 family.

The sequence is that of Small ribosomal subunit protein uS2 from Streptococcus pneumoniae (strain 70585).